The sequence spans 354 residues: Guanine nucleotide-binding protein G(i) subunit alpha-1 (354 aa).

Gly-2 carries N-myristoyl glycine lipidation. Residue Cys-3 is the site of S-palmitoyl cysteine attachment. One can recognise a G-alpha domain in the interval 32–354 (REVKLLLLGA…KNNLKDCGLF (323 aa)). The interval 35–48 (KLLLLGAGESGKST) is G1 motif. Residues 43-48 (ESGKST), 150-151 (DS), and 175-178 (LRTR) each bind GTP. Ser-47 serves as a coordination point for Mg(2+). A G2 motif region spans residues 173–181 (DVLRTRVKT). Residue Thr-181 participates in Mg(2+) binding. A G3 motif region spans residues 196 to 205 (FKMFDVGGQR). GTP-binding positions include 200–204 (DVGGQ), 269–272 (NKKD), and Ala-326. The interval 265 to 272 (ILFLNKKD) is G4 motif. Residues 324-329 (TCATDT) are G5 motif.

The protein belongs to the G-alpha family. G(i/o/t/z) subfamily. In terms of assembly, heterotrimeric G proteins are composed of 3 units; alpha, beta and gamma. The alpha chain contains the guanine nucleotide binding site. Part of a spindle orientation complex. Identified in complex with the beta subunit GNB1 and the gamma subunit GNG1. Identified in complex with the beta subunit GNB1 and the gamma subunit GNG2. GTP binding causes dissociation of the heterotrimer, liberating the individual subunits so that they can interact with downstream effector proteins. Myristoylation at Gly-2 is required for membrane anchoring before palmitoylation. In terms of processing, palmitoylation at Cys-3 varies with membrane lipid composition.

Its subcellular location is the nucleus. The protein localises to the cytoplasm. The protein resides in the cell membrane. It is found in the cytoskeleton. It localises to the microtubule organizing center. Its subcellular location is the centrosome. The protein localises to the cell cortex. The protein resides in the membrane. It catalyses the reaction GTP + H2O = GDP + phosphate + H(+). Guanine nucleotide-binding proteins (G proteins) function as transducers downstream of G protein-coupled receptors (GPCRs) in numerous signaling cascades. The alpha chain contains the guanine nucleotide binding site and alternates between an active, GTP-bound state and an inactive, GDP-bound state. Signaling by an activated GPCR promotes GDP release and GTP binding. The alpha subunit has a low GTPase activity that converts bound GTP to GDP, thereby terminating the signal. Both GDP release and GTP hydrolysis are modulated by numerous regulatory proteins. Signaling is mediated via effector proteins, such as adenylate cyclase. Inhibits adenylate cyclase activity of ADCY1, ADCY5 and ADCY6, leading to decreased intracellular cAMP levels. Required for cortical dynein-dynactin complex recruitment during metaphase. The chain is Guanine nucleotide-binding protein G(i) subunit alpha-1 (GNAI1) from Gallus gallus (Chicken).